The chain runs to 373 residues: UPF0725 protein At1g23950 (373 aa).

An N-acetylthreonine modification is found at Thr-2.

It belongs to the UPF0725 (EMB2204) family.

This chain is UPF0725 protein At1g23950, found in Arabidopsis thaliana (Mouse-ear cress).